Reading from the N-terminus, the 36-residue chain is Alpha-conotoxin-like Pu1.3 (36 aa).

Positions 1–21 (SDGRNAGADRKGFGLISQMFK) are excised as a propeptide. Intrachain disulfides connect Cys-24/Cys-30 and Cys-25/Cys-36.

The protein belongs to the conotoxin A superfamily. Expressed by the venom duct.

It is found in the secreted. Its function is as follows. Alpha-conotoxins act on postsynaptic membranes, they bind to the nicotinic acetylcholine receptors (nAChR) and thus inhibit them. The sequence is that of Alpha-conotoxin-like Pu1.3 from Conus pulicarius (Flea-bitten cone).